We begin with the raw amino-acid sequence, 232 residues long: LexA repressor (232 aa).

A DNA-binding region (H-T-H motif) is located at residues Phe-26–Thr-46. Catalysis depends on for autocatalytic cleavage activity residues Ser-153 and Lys-191.

It belongs to the peptidase S24 family. As to quaternary structure, homodimer.

The catalysed reaction is Hydrolysis of Ala-|-Gly bond in repressor LexA.. In terms of biological role, represses a number of genes involved in the response to DNA damage (SOS response), including recA and lexA. In the presence of single-stranded DNA, RecA interacts with LexA causing an autocatalytic cleavage which disrupts the DNA-binding part of LexA, leading to derepression of the SOS regulon and eventually DNA repair. This chain is LexA repressor, found in Bradyrhizobium sp. (strain BTAi1 / ATCC BAA-1182).